The following is a 692-amino-acid chain: Elongation factor G (692 aa).

A tr-type G domain is found at 8-282 (AKTRNIGIMA…AVIAYLPSPL (275 aa)). GTP-binding positions include 17 to 24 (AHVDAGKT), 81 to 85 (DTPGH), and 135 to 138 (NKMD).

Belongs to the TRAFAC class translation factor GTPase superfamily. Classic translation factor GTPase family. EF-G/EF-2 subfamily.

It is found in the cytoplasm. In terms of biological role, catalyzes the GTP-dependent ribosomal translocation step during translation elongation. During this step, the ribosome changes from the pre-translocational (PRE) to the post-translocational (POST) state as the newly formed A-site-bound peptidyl-tRNA and P-site-bound deacylated tRNA move to the P and E sites, respectively. Catalyzes the coordinated movement of the two tRNA molecules, the mRNA and conformational changes in the ribosome. This is Elongation factor G from Streptococcus equi subsp. equi (strain 4047).